Here is a 240-residue protein sequence, read N- to C-terminus: Aliphatic sulfonates import ATP-binding protein SsuB (240 aa).

The ABC transporter domain maps to 6 to 227; the sequence is IQLSKLRKNF…VKDRHFACFE (222 aa). 38–45 lines the ATP pocket; it reads GESGCGKS.

It belongs to the ABC transporter superfamily. Aliphatic sulfonates importer (TC 3.A.1.17.2) family. The complex is composed of two ATP-binding proteins (SsuB), two transmembrane proteins (SsuC) and a solute-binding protein (SsuA).

The protein localises to the cell inner membrane. The catalysed reaction is ATP + H2O + aliphatic sulfonate-[sulfonate-binding protein]Side 1 = ADP + phosphate + aliphatic sulfonateSide 2 + [sulfonate-binding protein]Side 1.. In terms of biological role, part of the ABC transporter complex SsuABC involved in aliphatic sulfonates import. Responsible for energy coupling to the transport system. In Zymomonas mobilis subsp. mobilis (strain ATCC 31821 / ZM4 / CP4), this protein is Aliphatic sulfonates import ATP-binding protein SsuB.